A 546-amino-acid polypeptide reads, in one-letter code: Parathyroid hormone 2 receptor (546 aa).

An N-terminal signal peptide occupies residues 1-24 (MAWLETFTYICGWLILSSCLLVRA). The Extracellular segment spans residues 27–143 (DSDGTITIEE…GKQEFFESLY (117 aa)). Residues N51, N106, N116, and N121 are each glycosylated (N-linked (GlcNAc...) asparagine). Residues 144 to 167 (ILYTVGYSISFGSLAVAILIIGYF) form a helical membrane-spanning segment. Residues 168 to 174 (RRLHCTR) are Cytoplasmic-facing. The chain crosses the membrane as a helical span at residues 175–194 (NYIHLHLFVSFMLRAMSIFV). At 195 to 235 (KDRVAQAHLGVEALQSLVMQGDLQNFIGGPSVDKSQYVGCK) the chain is on the extracellular side. Residues 236–258 (IAVVMFIYFLATNYYWILVEGLY) traverse the membrane as a helical segment. Residues 259 to 273 (LHNLIFVSFFSDTKY) are Cytoplasmic-facing. A helical membrane pass occupies residues 274 to 295 (LWGFISIGWGFPAVFVVAWAVA). Residues 296-313 (RATLADTRCWELSAGDRW) lie on the Extracellular side of the membrane. A helical membrane pass occupies residues 314–334 (IYQAPILAAIGLNFILFLNTV). Residues 335-361 (RVLATKIWETNAVGHDMRKQYRKLAKS) are Cytoplasmic-facing. Residues 362–380 (TLVLVLVFGVHYIVFVCQP) form a helical membrane-spanning segment. Residues 381–391 (HSFSGLWWEIR) lie on the Extracellular side of the membrane. A helical transmembrane segment spans residues 392 to 414 (MHCELFFNSFQGFFVSIVYCYCN). Over 415–546 (GEVQAEVKKM…EGCKGETHPI (132 aa)) the chain is Cytoplasmic. The segment at 497 to 546 (SEQDCQTHSPPEETKEGHRRQGDDSPVMESSRPVAFTLDTEGCKGETHPI) is disordered. Composition is skewed to basic and acidic residues over residues 506–519 (PPEETKEGHRRQGD) and 537–546 (EGCKGETHPI).

This sequence belongs to the G-protein coupled receptor 2 family. As to quaternary structure, binds to TIPF39/TIP39.

It is found in the cell membrane. Functionally, this is a specific receptor for parathyroid hormone. The activity of this receptor is mediated by G proteins which activate adenylyl cyclase. PTH2R may be responsible for PTH effects in a number of physiological systems. It may play a significant role in pancreatic function. PTH2R presence in neurons indicates that it may function as a neurotransmitter receptor. The protein is Parathyroid hormone 2 receptor (Pth2r) of Mus musculus (Mouse).